A 605-amino-acid polypeptide reads, in one-letter code: MPESAAAPIHLPKTSESERLKRIRHTTSHILAMAVQKLFPKAQVTIGPWIENGFYYDFDHPEPFSEKDLRLIEKEMVKIIKRKLPVIREEVTREEAERRIRALGEPYKLEILQDLEEPITIYHLGDEWWDLCAGPHVENTGEIDPKAIALESVAGAYWRGDETKAQLQRIYGTAWETPEQLAEYKRRKEEALRRDHRKVGKELGLFIFADPVGPGLPLWTPRGTVLRSTLEDFLKKEQLKRGYLPVVTPHIARVDLFKTSGHWQKYKEDMFPLMAEDAEAAAHEQGFVLKPMNCPFHIQIYKSELRSYRDLPLRLAEFGTVYRYEQSGELGGLTRVRGFTVDDSHLFVTPEQLDAEFLNVVDLILTVFRCLRLNKFKARLSFRDPKSDKYIGSDEAWSKAEAAIQRAVEQLGMEHFLGIGEAAFYGPKLDFIFEDALGREWQLGTVQVDYNLPERFDLEYVAEDNTRRRPVMIHRAPFGSLERLIGILIEEYAGDFPFWLAPEQVRLLPVGDEQRPYAERVAAQLRERGVRVSVDRSGDRLGKQIRNAETQKIPVMGIIGAKEVEHETVSIRTRAAGDVGTFALEHLIAKLTSAMAAIHGDIDWS.

Residues 195–497 (DHRKVGKELG…LIEEYAGDFP (303 aa)) are catalytic. Zn(2+)-binding residues include C294, H345, and H474.

It belongs to the class-II aminoacyl-tRNA synthetase family. As to quaternary structure, homodimer. It depends on Zn(2+) as a cofactor.

The protein resides in the cytoplasm. It carries out the reaction tRNA(Thr) + L-threonine + ATP = L-threonyl-tRNA(Thr) + AMP + diphosphate + H(+). Its function is as follows. Catalyzes the attachment of threonine to tRNA(Thr) in a two-step reaction: L-threonine is first activated by ATP to form Thr-AMP and then transferred to the acceptor end of tRNA(Thr). Also edits incorrectly charged L-seryl-tRNA(Thr). This chain is Threonine--tRNA ligase, found in Thermosynechococcus vestitus (strain NIES-2133 / IAM M-273 / BP-1).